The following is a 608-amino-acid chain: Nuclear receptor subfamily 2 group C member 1 (608 aa).

Positions 1-179 are required for interaction with KAT2B; sequence MASIEEIAHQ…RLQRCIAFGM (179 aa). A DNA-binding region (nuclear receptor) is located at residues 111–186; it reads FDLCVVCGDK…FGMKQDSVQC (76 aa). 2 consecutive NR C4-type zinc fingers follow at residues 114–134 and 150–169; these read CVVCGDKASGRHYGEVTCEGC and CRGSKDCIINKHHRNRCQYC. Phosphoserine is present on residues serine 198 and serine 216. Threonine 221 bears the Phosphothreonine mark. Threonine 223 is modified (phosphothreonine; by MAPK1). A Glycyl lysine isopeptide (Lys-Gly) (interchain with G-Cter in SUMO); alternate cross-link involves residue lysine 251. Lysine 251 participates in a covalent cross-link: Glycyl lysine isopeptide (Lys-Gly) (interchain with G-Cter in SUMO2); alternate. An NR LBD domain is found at 353-595; sequence GNVHLIAGDS…SVIPHILKME (243 aa). A Phosphoserine; by PKC modification is found at serine 586. A required for interaction with NRIP1 region spans residues 589 to 608; it reads PHILKMEPADYNSQIIGHSI. A Glycyl lysine isopeptide (Lys-Gly) (interchain with G-Cter in SUMO2) cross-link involves residue lysine 593.

Belongs to the nuclear hormone receptor family. NR2 subfamily. As to quaternary structure, homodimer. Heterodimer; with NR2C2 which is required for chromatin remodeling and for binding to promoter regions such as globin DR1 repeats. Interacts with ESR1; the interaction prevents homodimerization of ESR1 and suppresses its transcriptional activity and cell growth. Interacts with NRIP1 (via its LXXLL motifs); the interaction provides corepressor activity. Interacts with HDAC3 (via the DNA-binding domain); the interaction recruits phosphorylated NR2C1 to PML bodies for sumoylation. Interacts with HDAC4 (via the DNA-binding domain). Interacts with PIAS1; the interaction is required for sumoylation of NR2C1. Interacts with UBE2I; the interaction is required for sumoylation of NR2C1. Interacts with KAT2B; the interaction acts as a corepressor of gene expression. Sumoylation requires both PIAS1 and UBE2I. Sumoylation appears to dissociate NR2C1 from the PML nuclear bodies. Enhances the interaction with NRIP1 but inhibits interaction with KAT2B. In proliferating cells, stimulation by all-trans retinoic acid, activation of MAPK1-mediated phosphorylation and recruitment to PML bodies with subsequent sumoylation, suppresses OCT4 expression. Post-translationally, phosphorylated on several serine and threonine residues. Phosphorylation on Thr-223, stimulated by all-trans retinoic acid (atRA) mediates PML location and sumoylation in proliferating cells which then modulates its association with effector molecules, KAT2B and NRIP1. Phosphorylation on Ser-586 by PKC is important for protein stability and function as activator of RARB.

It localises to the nucleus. The protein localises to the PML body. Its function is as follows. Orphan nuclear receptor. Binds the IR7 element in the promoter of its own gene in an autoregulatory negative feedback mechanism. Primarily repressor of a broad range of genes including ESR1 and RARB. Together with NR2C2, forms the core of the DRED (direct repeat erythroid-definitive) complex that represses embryonic and fetal globin transcription. Binds to hormone response elements (HREs) consisting of two 5'-AGGTCA-3' half site direct repeat consensus sequences. Also activator of OCT4 gene expression. Plays a fundamental role in early embryogenesis and regulates embryonic stem cell proliferation and differentiation. Mediator of retinoic acid-regulated preadipocyte proliferation. The sequence is that of Nuclear receptor subfamily 2 group C member 1 (NR2C1) from Bos taurus (Bovine).